A 410-amino-acid polypeptide reads, in one-letter code: LL-diaminopimelate aminotransferase (410 aa).

Residues Tyr-15 and Gly-42 each contribute to the substrate site. Pyridoxal 5'-phosphate-binding positions include Tyr-72, Ser-108 to Lys-109, Tyr-132, Asn-187, Tyr-218, and Ser-246 to Ser-248. Positions 109, 132, and 187 each coordinate substrate. Lys-249 carries the post-translational modification N6-(pyridoxal phosphate)lysine. Residues Arg-257 and Asn-292 each contribute to the pyridoxal 5'-phosphate site. Positions 292 and 388 each coordinate substrate.

The protein belongs to the class-I pyridoxal-phosphate-dependent aminotransferase family. LL-diaminopimelate aminotransferase subfamily. Homodimer. Pyridoxal 5'-phosphate serves as cofactor.

It carries out the reaction (2S,6S)-2,6-diaminopimelate + 2-oxoglutarate = (S)-2,3,4,5-tetrahydrodipicolinate + L-glutamate + H2O + H(+). It participates in amino-acid biosynthesis; L-lysine biosynthesis via DAP pathway; LL-2,6-diaminopimelate from (S)-tetrahydrodipicolinate (aminotransferase route): step 1/1. In terms of biological role, involved in the synthesis of meso-diaminopimelate (m-DAP or DL-DAP), required for both lysine and peptidoglycan biosynthesis. Catalyzes the direct conversion of tetrahydrodipicolinate to LL-diaminopimelate. The sequence is that of LL-diaminopimelate aminotransferase from Geobacter metallireducens (strain ATCC 53774 / DSM 7210 / GS-15).